The chain runs to 1342 residues: DNA-directed RNA polymerase subunit beta (1342 aa).

The protein belongs to the RNA polymerase beta chain family. The RNAP catalytic core consists of 2 alpha, 1 beta, 1 beta' and 1 omega subunit. When a sigma factor is associated with the core the holoenzyme is formed, which can initiate transcription.

The enzyme catalyses RNA(n) + a ribonucleoside 5'-triphosphate = RNA(n+1) + diphosphate. DNA-dependent RNA polymerase catalyzes the transcription of DNA into RNA using the four ribonucleoside triphosphates as substrates. The chain is DNA-directed RNA polymerase subunit beta from Salmonella typhimurium (strain LT2 / SGSC1412 / ATCC 700720).